The following is a 66-amino-acid chain: Small ribosomal subunit protein bS21 (66 aa).

This sequence belongs to the bacterial ribosomal protein bS21 family.

The protein is Small ribosomal subunit protein bS21 of Maridesulfovibrio salexigens (strain ATCC 14822 / DSM 2638 / NCIMB 8403 / VKM B-1763) (Desulfovibrio salexigens).